The sequence spans 429 residues: UDP-N-acetylglucosamine 1-carboxyvinyltransferase (429 aa).

22 to 23 (KN) provides a ligand contact to phosphoenolpyruvate. Arg-102 contacts UDP-N-acetyl-alpha-D-glucosamine. The active-site Proton donor is the Cys-126. The residue at position 126 (Cys-126) is a 2-(S-cysteinyl)pyruvic acid O-phosphothioketal. Residues 171 to 174 (KVSV), Asp-316, and Ile-338 contribute to the UDP-N-acetyl-alpha-D-glucosamine site.

The protein belongs to the EPSP synthase family. MurA subfamily.

The protein localises to the cytoplasm. It carries out the reaction phosphoenolpyruvate + UDP-N-acetyl-alpha-D-glucosamine = UDP-N-acetyl-3-O-(1-carboxyvinyl)-alpha-D-glucosamine + phosphate. The protein operates within cell wall biogenesis; peptidoglycan biosynthesis. Its function is as follows. Cell wall formation. Adds enolpyruvyl to UDP-N-acetylglucosamine. The polypeptide is UDP-N-acetylglucosamine 1-carboxyvinyltransferase (Xanthobacter autotrophicus (strain ATCC BAA-1158 / Py2)).